A 108-amino-acid chain; its full sequence is Large ribosomal subunit protein uL24 (108 aa).

It belongs to the universal ribosomal protein uL24 family. In terms of assembly, part of the 50S ribosomal subunit.

Its function is as follows. One of two assembly initiator proteins, it binds directly to the 5'-end of the 23S rRNA, where it nucleates assembly of the 50S subunit. In terms of biological role, one of the proteins that surrounds the polypeptide exit tunnel on the outside of the subunit. The sequence is that of Large ribosomal subunit protein uL24 from Citrifermentans bemidjiense (strain ATCC BAA-1014 / DSM 16622 / JCM 12645 / Bem) (Geobacter bemidjiensis).